A 117-amino-acid chain; its full sequence is Non-specific lipid-transfer protein (117 aa).

A signal peptide spans 1–26 (MASSAFVKFTCALVMCMMVAAPLAEA). Disulfide bonds link Cys29-Cys76, Cys39-Cys53, Cys54-Cys99, and Cys74-Cys113.

This sequence belongs to the plant LTP family.

Its function is as follows. Plant non-specific lipid-transfer proteins transfer phospholipids as well as galactolipids across membranes. May play a role in wax or cutin deposition in the cell walls of expanding epidermal cells and certain secretory tissues. Also has fungicide activity. This chain is Non-specific lipid-transfer protein (IWF1'), found in Beta vulgaris (Sugar beet).